Here is a 435-residue protein sequence, read N- to C-terminus: 3-ketoacyl-CoA thiolase (435 aa).

The active-site Acyl-thioester intermediate is the Cys-98. Catalysis depends on proton acceptor residues His-391 and Cys-421.

This sequence belongs to the thiolase-like superfamily. Thiolase family. In terms of assembly, heterotetramer of two alpha chains (FadJ) and two beta chains (FadI).

The protein localises to the cytoplasm. The enzyme catalyses an acyl-CoA + acetyl-CoA = a 3-oxoacyl-CoA + CoA. The protein operates within lipid metabolism; fatty acid beta-oxidation. In terms of biological role, catalyzes the final step of fatty acid oxidation in which acetyl-CoA is released and the CoA ester of a fatty acid two carbons shorter is formed. This Vibrio cholerae serotype O1 (strain ATCC 39315 / El Tor Inaba N16961) protein is 3-ketoacyl-CoA thiolase.